A 578-amino-acid polypeptide reads, in one-letter code: mRNA-decapping enzyme 1B (578 aa).

A2 carries the N-acetylalanine modification. Phosphoserine occurs at positions 144 and 145. 2 disordered regions span residues 187 to 222 (AICD…PEPQ) and 246 to 265 (RTFA…TRPV). Over residues 248 to 257 (FAHHHHHHHQ) the composition is skewed to basic residues. Residues S274 and S335 each carry the phosphoserine modification. T380 is modified (phosphothreonine).

Belongs to the DCP1 family. As to quaternary structure, interacts with DCP1A.

The protein resides in the cytoplasm. The protein localises to the nucleus. The catalysed reaction is a 5'-end (N(7)-methyl 5'-triphosphoguanosine)-ribonucleoside in mRNA + H2O = N(7)-methyl-GDP + a 5'-end phospho-ribonucleoside in mRNA + 2 H(+). Functionally, may play a role in the degradation of mRNAs, both in normal mRNA turnover and in nonsense-mediated mRNA decay. May remove the 7-methyl guanine cap structure from mRNA molecules, yielding a 5'-phosphorylated mRNA fragment and 7m-GDP. This chain is mRNA-decapping enzyme 1B (Dcp1b), found in Mus musculus (Mouse).